Consider the following 396-residue polypeptide: Chaperone protein DnaJ 1 (396 aa).

Residues 10 to 75 enclose the J domain; sequence DYYKVLGVPK…KKRKEYDEAR (66 aa). Gly residues predominate over residues 127–137; the sequence is LFNRGGAGPGT. Positions 127–149 are disordered; sequence LFNRGGAGPGTGTRTQPRRGQDI. The CR-type zinc-finger motif lies at 163–241; the sequence is GATVPLRMSS…CKGSGRAKSS (79 aa). Zn(2+) is bound by residues C176, C179, C192, C195, C215, C218, C229, and C232. 4 CXXCXGXG motif repeats span residues 176 to 183, 192 to 199, 215 to 222, and 229 to 236; these read CKACSGTG, CPTCVGTG, CPDCKGRG, and CEICKGSG.

Belongs to the DnaJ family. In terms of assembly, homodimer. Zn(2+) is required as a cofactor.

The protein localises to the cytoplasm. In terms of biological role, participates actively in the response to hyperosmotic and heat shock by preventing the aggregation of stress-denatured proteins and by disaggregating proteins, also in an autonomous, DnaK-independent fashion. Unfolded proteins bind initially to DnaJ; upon interaction with the DnaJ-bound protein, DnaK hydrolyzes its bound ATP, resulting in the formation of a stable complex. GrpE releases ADP from DnaK; ATP binding to DnaK triggers the release of the substrate protein, thus completing the reaction cycle. Several rounds of ATP-dependent interactions between DnaJ, DnaK and GrpE are required for fully efficient folding. Also involved, together with DnaK and GrpE, in the DNA replication of plasmids through activation of initiation proteins. This is Chaperone protein DnaJ 1 from Streptomyces avermitilis (strain ATCC 31267 / DSM 46492 / JCM 5070 / NBRC 14893 / NCIMB 12804 / NRRL 8165 / MA-4680).